A 233-amino-acid chain; its full sequence is Large ribosomal subunit protein uL1 (233 aa).

The protein belongs to the universal ribosomal protein uL1 family. In terms of assembly, part of the 50S ribosomal subunit.

Functionally, binds directly to 23S rRNA. The L1 stalk is quite mobile in the ribosome, and is involved in E site tRNA release. In terms of biological role, protein L1 is also a translational repressor protein, it controls the translation of the L11 operon by binding to its mRNA. The sequence is that of Large ribosomal subunit protein uL1 from Proteus vulgaris.